Reading from the N-terminus, the 139-residue chain is Trafficking protein particle complex subunit 2-like protein (139 aa).

The protein belongs to the TRAPP small subunits family. Sedlin subfamily. In terms of assembly, component of the multisubunit TRAPP (transport protein particle) complex, which includes at least TRAPPC2, TRAPPC2L, TRAPPC3, TRAPPC3L, TRAPPC4, TRAPPC5, TRAPPC8, TRAPPC9, TRAPPC10, TRAPPC11 and TRAPPC12. Interacts with the heterodimer TRAPPC3-TRAPPC6A.

It localises to the cytoplasm. It is found in the perinuclear region. Its subcellular location is the endoplasmic reticulum. The protein localises to the golgi apparatus. Its function is as follows. May play a role in vesicular transport from endoplasmic reticulum to Golgi. This chain is Trafficking protein particle complex subunit 2-like protein (TRAPPC2L), found in Bos taurus (Bovine).